Reading from the N-terminus, the 390-residue chain is EF-hand calcium-binding domain-containing protein 4A (390 aa).

Over residues 1–27 the composition is skewed to low complexity; it reads MSPRSTLRSPLPSRTARSSASSDTPSP. The interval 1 to 37 is disordered; that stretch reads MSPRSTLRSPLPSRTARSSASSDTPSPGADRQDRMSK. EF-hand domains follow at residues 33–66 and 67–102; these read DRMSKAKELFVLCDKEGKGFITKRDMQRLQQELP and LSPEQLESVFESLDRDRNGYLTPLEFHTGLGELVGS. Ca(2+)-binding residues include D80, D82, N84, Y86, and E91. Residues 173–357 adopt a coiled-coil conformation; the sequence is SHLQDALKEK…DDKDAHQAQK (185 aa). A disordered region spans residues 206–234; sequence DMESQLKEERERRQALDSMRQGDKKEQLL.

The protein belongs to the EFCAB4 family.

The polypeptide is EF-hand calcium-binding domain-containing protein 4A (cracr2b) (Danio rerio (Zebrafish)).